A 350-amino-acid polypeptide reads, in one-letter code: Transmembrane protein 185A (350 aa).

A run of 7 helical transmembrane segments spans residues 16-36 (LIYA…DGII), 41-61 (WAVF…ASVG), 81-101 (FKAM…EVLV), 111-131 (FWLL…AACV), 177-197 (ILMS…VLFL), 211-231 (ITMA…EILL), and 240-260 (AFSC…LMAT). The interval 298–350 (DLHHEDSEETEETPVPEPPKIAPMFRKKARVVITQSPGKYVLPPPKLNIEMPD) is mediates interaction with MAP1B.

The protein belongs to the TMEM185 family. Interacts with MAP1B. Broadly expressed in brain where it is specifically expressed by neurons (at protein level). Also detected in some cells of arterioles, intestine, lung and testis (at protein level).

Its subcellular location is the cell projection. It localises to the dendrite. The protein resides in the membrane. This chain is Transmembrane protein 185A (Tmem185a), found in Mus musculus (Mouse).